The following is a 322-amino-acid chain: Probable transposase for insertion sequence element ISA1214 (322 aa).

It belongs to the transposase 11 family.

Its function is as follows. Involved in the transposition of the insertion sequence ISA1214. The protein is Probable transposase for insertion sequence element ISA1214 of Archaeoglobus fulgidus (strain ATCC 49558 / DSM 4304 / JCM 9628 / NBRC 100126 / VC-16).